We begin with the raw amino-acid sequence, 337 residues long: Putative high mobility group B protein 11 (337 aa).

Residues 34-125 form the ARID domain; it reads VRNPELFWEM…MLFEFEHLYY (92 aa). 2 disordered regions span residues 197 to 221 and 298 to 337; these read TKRGKKKAKSSQGDSHKPPKRQRTG and AGTSASAAETADEASQENLAKTDACTSASSAAETEDEVSQ. The segment at residues 215 to 282 is a DNA-binding region (HMG box); it reads PKRQRTGYNF…RYKMEILQYR (68 aa). Over residues 319-329 the composition is skewed to low complexity; the sequence is TDACTSASSAA.

It belongs to the HMGB family.

It is found in the nucleus. Functionally, binds preferentially DNA with A/T-rich content. The protein is Putative high mobility group B protein 11 (HMGB11) of Arabidopsis thaliana (Mouse-ear cress).